Here is a 338-residue protein sequence, read N- to C-terminus: 26S proteasome non-ATPase regulatory subunit 7 (338 aa).

The MPN domain occupies 11–147 (VIVHPLVLLS…TEAYISVEEV (137 aa)). The segment at 286-338 (RDAEEGKSDSKEAKEKNKDSKDKDNKETKDKDGKKAEEKADKGKDEGGKGSRK) is disordered.

Belongs to the peptidase M67A family.

Acts as a regulatory subunit of the 26S proteasome which is involved in the ATP-dependent degradation of ubiquitinated proteins. In Drosophila melanogaster (Fruit fly), this protein is 26S proteasome non-ATPase regulatory subunit 7 (Rpn8).